Consider the following 118-residue polypeptide: Small ribosomal subunit protein bS6 (118 aa).

Belongs to the bacterial ribosomal protein bS6 family.

Functionally, binds together with bS18 to 16S ribosomal RNA. The sequence is that of Small ribosomal subunit protein bS6 from Parabacteroides distasonis (strain ATCC 8503 / DSM 20701 / CIP 104284 / JCM 5825 / NCTC 11152).